A 205-amino-acid chain; its full sequence is Histidine biosynthesis bifunctional protein HisIE (205 aa).

The segment at 1–116 (MLKLKFNEEG…KVEKPLPFEV (116 aa)) is phosphoribosyl-AMP cyclohydrolase. Positions 117–205 (LPRLQDVIRE…VMEELIRRFK (89 aa)) are phosphoribosyl-ATP pyrophosphohydrolase.

This sequence in the N-terminal section; belongs to the PRA-CH family. It in the C-terminal section; belongs to the PRA-PH family.

The protein resides in the cytoplasm. The enzyme catalyses 1-(5-phospho-beta-D-ribosyl)-ATP + H2O = 1-(5-phospho-beta-D-ribosyl)-5'-AMP + diphosphate + H(+). The catalysed reaction is 1-(5-phospho-beta-D-ribosyl)-5'-AMP + H2O = 1-(5-phospho-beta-D-ribosyl)-5-[(5-phospho-beta-D-ribosylamino)methylideneamino]imidazole-4-carboxamide. It functions in the pathway amino-acid biosynthesis; L-histidine biosynthesis; L-histidine from 5-phospho-alpha-D-ribose 1-diphosphate: step 2/9. Its pathway is amino-acid biosynthesis; L-histidine biosynthesis; L-histidine from 5-phospho-alpha-D-ribose 1-diphosphate: step 3/9. The sequence is that of Histidine biosynthesis bifunctional protein HisIE (hisI) from Aquifex aeolicus (strain VF5).